A 275-amino-acid polypeptide reads, in one-letter code: 2-dehydro-3-deoxyphosphooctonate aldolase (275 aa).

This sequence belongs to the KdsA family.

The protein localises to the cytoplasm. It catalyses the reaction D-arabinose 5-phosphate + phosphoenolpyruvate + H2O = 3-deoxy-alpha-D-manno-2-octulosonate-8-phosphate + phosphate. It participates in carbohydrate biosynthesis; 3-deoxy-D-manno-octulosonate biosynthesis; 3-deoxy-D-manno-octulosonate from D-ribulose 5-phosphate: step 2/3. The protein operates within bacterial outer membrane biogenesis; lipopolysaccharide biosynthesis. In Francisella tularensis subsp. holarctica (strain LVS), this protein is 2-dehydro-3-deoxyphosphooctonate aldolase.